A 212-amino-acid chain; its full sequence is uncharacterized protein (212 aa).

The region spanning 29 to 146 (KGKAGEKLVK…AAFHPKCSLK (118 aa)) is the NERD domain.

This is an uncharacterized protein from Bacillus anthracis.